The primary structure comprises 179 residues: Large ribosomal subunit protein uL6 (179 aa).

The protein belongs to the universal ribosomal protein uL6 family. In terms of assembly, part of the 50S ribosomal subunit.

Its function is as follows. This protein binds to the 23S rRNA, and is important in its secondary structure. It is located near the subunit interface in the base of the L7/L12 stalk, and near the tRNA binding site of the peptidyltransferase center. In Kineococcus radiotolerans (strain ATCC BAA-149 / DSM 14245 / SRS30216), this protein is Large ribosomal subunit protein uL6.